The chain runs to 1349 residues: Adhesion G protein-coupled receptor F5 (1349 aa).

Residues 1–24 form the signal peptide; that stretch reads MKSSRTVTLYFVLIVICSSEATWS. Topologically, residues 25–1016 are extracellular; it reads RPAEPIVHPL…PGSLLKILLD (992 aa). Asparagine 73, asparagine 94, asparagine 185, asparagine 254, asparagine 270, asparagine 286, asparagine 299, asparagine 326, asparagine 337, asparagine 349, asparagine 396, asparagine 470, asparagine 503, asparagine 538, asparagine 649, and asparagine 666 each carry an N-linked (GlcNAc...) asparagine glycan. An SEA domain is found at 163–271; the sequence is PETYITLKIK…NSFQGTPSNE (109 aa). Ig-like domains lie at 268 to 366, 367 to 464, and 469 to 559; these read PSNE…LDVT, PIRI…IAVT, and ANLT…KDVT. Cysteine 291 and cysteine 348 form a disulfide bridge. Residues cysteine 389 and cysteine 447 are joined by a disulfide bond. A disulfide bridge links cysteine 490 with cysteine 543. Serine 819 bears the Phosphoserine mark. N-linked (GlcNAc...) asparagine glycans are attached at residues asparagine 820, asparagine 958, and asparagine 963. In terms of domain architecture, GAIN-B spans 842–1006; the sequence is TPPFLFHPNV…SILMSPDSPD (165 aa). Cystine bridges form between cysteine 954-cysteine 988 and cysteine 973-cysteine 990. Positions 954–1006 are GPS; sequence CVFWNFSLANNTGGWDSSGCTVEDDGRDNRDRVFCKCNHLTSFSILMSPDSPD. Positions 994 to 1009 are tethered agonist; it reads TSFSILMSPDSPDPGS. A helical transmembrane segment spans residues 1017–1036; it reads IISYIGLGFSIVSLAACLVV. Over 1037–1055 the chain is Cytoplasmic; sequence EAMVWKSVTKNRTSYMRHI. A helical membrane pass occupies residues 1056 to 1078; it reads CIVNIALCLLIADIWFIVAGAIH. The Extracellular segment spans residues 1079 to 1097; the sequence is DGHYPLNETACVAATFFIH. N-linked (GlcNAc...) asparagine glycosylation occurs at asparagine 1085. Residues 1098–1120 traverse the membrane as a helical segment; it reads FFYLSVFFWMLTLGLMLFYRLIF. The Cytoplasmic segment spans residues 1121–1131; the sequence is ILHDASKSTQK. Residues 1132–1154 traverse the membrane as a helical segment; sequence AIAFSLGYGCPLIISSITVGVTQ. At 1155–1173 the chain is on the extracellular side; sequence PQEVYMRKNACWLNWEDTR. A helical membrane pass occupies residues 1174–1196; it reads ALLAFAIPALIIVVVNVSITVVV. The Cytoplasmic portion of the chain corresponds to 1197-1216; it reads ITKILRPSVGDKPGKQEKSS. Residues 1217-1239 form a helical membrane-spanning segment; sequence LFQISKSIGVLTPLLGLTWGFGL. Residues 1240-1248 are Extracellular-facing; the sequence is ATVIQGSNA. The chain crosses the membrane as a helical span at residues 1249–1271; sequence VFHIIFTLLNAFQGLFILLFGCL. The Cytoplasmic segment spans residues 1272–1349; that stretch reads WDQKVQEALL…NSSSAYSLLN (78 aa). Threonine 1303 carries the phosphothreonine modification. Serine 1310 carries the post-translational modification Phosphoserine. Over residues 1329–1343 the composition is skewed to low complexity; it reads STPETTSSSVENSSS. Residues 1329 to 1349 form a disordered region; sequence STPETTSSSVENSSSAYSLLN.

It belongs to the G-protein coupled receptor 2 family. Adhesion G-protein coupled receptor (ADGR) subfamily. As to quaternary structure, homodimer; disulfide-linked. Heterodimer of 2 chains generated by proteolytic processing; the large extracellular N-terminal fragment and the membrane-bound C-terminal fragment predominantly remain associated and non-covalently linked. Fragment generates by the processing enzyme furin remains attached to the extracellular N-terminal fragment. Interacts (via N-terminal extracellular domain) with SFTPD. Post-translationally, highly glycosylated. In terms of processing, proteolytically cleaved at multiple sites: one in the GPS region of the GAIN-B domain (S1 site) and the other in the SEA domain (S2 site). The proteolytic cleavage at S1 site generates an extracellular subunit and a seven-transmembrane subunit. The proteolytic cleavage at S2 site generates a fragment that undergoes proteolytic cleavage by the processing enzyme furin. In terms of tissue distribution, highly expressed in the lung and to a much lesser extent in the kidney and heart. Dense localization in alveolar walls of the lung and in the intercalated cells of the collecting duct of the kidney.

Its subcellular location is the cell membrane. With respect to regulation, as an adhesion G protein-coupled receptor (aGPCR) exhibits a large N-terminal extracellular domain containing highly conserved GPCR autoproteolysis-inducing (GAIN) domain. During synthesis, intracellular autoproteolytic processing of nascent chain within the GAIN domain generates a mature protein, consisting of an N-terminal fragment that is non-covalently linked to the C-terminal fragment. The mature protein is routed to the plasma membrane where the N- and C-terminal fragments remain associated, forming the holoreceptor. Dissociation of the aGPCR fragments stimulates G protein signaling through the action of the tethered-peptide agonist stalk that is occluded within the GAIN domain in the holoreceptor form. This dissociation might be induced by ligand binding, such as that of sFNDC4. Receptor that plays a critical role in lung surfactant homeostasis. May play a role in controlling adipocyte function. Functionally, adhesion G protein-coupled receptor. In alveolar type II (ATII or AT2) cells, required for normal lung surfactant homeostasis. Modulation of both surfactant secretion and uptake by ATII cells is mediated by the downstream activation of GNAQ/GNA11 proteins and may be a consequence of increased cortical F-actin assembly induced by ADGRF5 activation. In the kidney, may play a role in the regulation of acid excretion into the primary urine, possibly by regulating the surface expression of V-ATPase proton pump. As a receptor for soluble FNDC4 (sFNDC4), required for proper systemic glucose tolerance, specifically sensitizing white adipose tissue to insulin. Also plays a role in sFNDC4-induced decrease of local inflammation in white adipose tissue. This is Adhesion G protein-coupled receptor F5 (Adgrf5) from Rattus norvegicus (Rat).